Consider the following 319-residue polypeptide: Acetyl-coenzyme A carboxylase carboxyl transferase subunit alpha (319 aa).

Residues 34-295 form the CoA carboxyltransferase C-terminal domain; that stretch reads ELEEEVSKLK…KVRLKRDLAD (262 aa).

This sequence belongs to the AccA family. As to quaternary structure, acetyl-CoA carboxylase is a heterohexamer composed of biotin carboxyl carrier protein (AccB), biotin carboxylase (AccC) and two subunits each of ACCase subunit alpha (AccA) and ACCase subunit beta (AccD).

The protein localises to the cytoplasm. It carries out the reaction N(6)-carboxybiotinyl-L-lysyl-[protein] + acetyl-CoA = N(6)-biotinyl-L-lysyl-[protein] + malonyl-CoA. It functions in the pathway lipid metabolism; malonyl-CoA biosynthesis; malonyl-CoA from acetyl-CoA: step 1/1. Its function is as follows. Component of the acetyl coenzyme A carboxylase (ACC) complex. First, biotin carboxylase catalyzes the carboxylation of biotin on its carrier protein (BCCP) and then the CO(2) group is transferred by the carboxyltransferase to acetyl-CoA to form malonyl-CoA. The protein is Acetyl-coenzyme A carboxylase carboxyl transferase subunit alpha of Pseudoalteromonas translucida (strain TAC 125).